A 125-amino-acid chain; its full sequence is Fluoride-specific ion channel FluC (125 aa).

Transmembrane regions (helical) follow at residues 4–24, 35–55, 68–88, and 100–120; these read IALVATGGAIGSVFRYLVGVW, WGTLAVNIVGSFLIGLLVELV, FLVTGVLGGFTTFSSFSLDAV, and AFYILASLVVSIAAVFAGLAL. Gly75 and Thr78 together coordinate Na(+).

Belongs to the fluoride channel Fluc/FEX (TC 1.A.43) family.

The protein resides in the cell inner membrane. The catalysed reaction is fluoride(in) = fluoride(out). Na(+) is not transported, but it plays an essential structural role and its presence is essential for fluoride channel function. In terms of biological role, fluoride-specific ion channel. Important for reducing fluoride concentration in the cell, thus reducing its toxicity. This Agrobacterium fabrum (strain C58 / ATCC 33970) (Agrobacterium tumefaciens (strain C58)) protein is Fluoride-specific ion channel FluC.